The chain runs to 449 residues: Cysteine--tRNA ligase (449 aa).

C29 contacts Zn(2+). The 'HIGH' region signature appears at 31-41 (PTVYDHLHIGN). Positions 211, 236, and 240 each coordinate Zn(2+). The 'KMSKS' region signature appears at 269–273 (KMSKS). An ATP-binding site is contributed by K272.

The protein belongs to the class-I aminoacyl-tRNA synthetase family. In terms of assembly, monomer. The cofactor is Zn(2+).

The protein resides in the cytoplasm. The catalysed reaction is tRNA(Cys) + L-cysteine + ATP = L-cysteinyl-tRNA(Cys) + AMP + diphosphate. The polypeptide is Cysteine--tRNA ligase (Methylocella silvestris (strain DSM 15510 / CIP 108128 / LMG 27833 / NCIMB 13906 / BL2)).